Here is a 237-residue protein sequence, read N- to C-terminus: Ras-related protein Rab-23 (237 aa).

Positions 20, 21, 22, 23, 24, 38, and 41 each coordinate GTP. Ser23 lines the Mg(2+) pocket. The short motif at 28-46 (RYCKGIFTKDYKKTIGVDF) is the Switch 1 element. Mg(2+) contacts are provided by Thr41 and Asp64. A Switch 2 motif is present at residues 65–84 (TAGQEEFDAITKAYYRGAQA). Residues Gly67, Asn121, Lys122, Asp124, Ser151, Val152, and Lys153 each contribute to the GTP site. A phosphoserine mark is found at Ser186 and Ser187. Positions 188 to 208 (SNKIGVFNTSGGSHSGQNSGT) are enriched in polar residues. Residues 188 to 237 (SNKIGVFNTSGGSHSGQNSGTLNGGDVINLRPNKQRTKKNRNPFSSCSIP) are disordered. Cys234 carries the post-translational modification Cysteine methyl ester. Residue Cys234 is the site of S-geranylgeranyl cysteine attachment. Residues 235 to 237 (SIP) constitute a propeptide, removed in mature form.

This sequence belongs to the small GTPase superfamily. Rab family. Interacts with SUFU. It depends on Mg(2+) as a cofactor.

The protein resides in the cell membrane. It localises to the cytoplasm. Its subcellular location is the cytoplasmic vesicle. It is found in the autophagosome. The protein localises to the endosome membrane. The protein resides in the phagosome. It localises to the phagosome membrane. It catalyses the reaction GTP + H2O = GDP + phosphate + H(+). Regulated by guanine nucleotide exchange factors (GEFs) which promote the exchange of bound GDP for free GTP. Regulated by GTPase activating proteins (GAPs) which increase the GTP hydrolysis activity. Inhibited by GDP dissociation inhibitors (GDIs). Functionally, the small GTPases Rab are key regulators of intracellular membrane trafficking, from the formation of transport vesicles to their fusion with membranes. Rabs cycle between an inactive GDP-bound form and an active GTP-bound form that is able to recruit to membranes different set of downstream effectors directly responsible for vesicle formation, movement, tethering and fusion. Together with SUFU, prevents nuclear import of GLI1, and thereby inhibits GLI1 transcription factor activity. Regulates GLI1 in differentiating chondrocytes. Likewise, regulates GLI3 proteolytic processing and modulates GLI2 and GLI3 transcription factor activity. Plays a role in autophagic vacuole assembly, and mediates defense against pathogens, such as S.aureus, by promoting their capture by autophagosomes that then merge with lysosomes. This is Ras-related protein Rab-23 from Homo sapiens (Human).